The sequence spans 128 residues: Head peptide (128 aa).

A signal peptide spans M1–D22. Q23 carries the post-translational modification Pyrrolidone carboxylic acid. P26 bears the Hydroxyproline; partial mark. The segment at S27 to N128 is disordered. F32 is subject to Phenylalanine amide. Positions S35 to A55 are excised as a propeptide. Q56 is modified (pyrrolidone carboxylic acid). P59 is modified (hydroxyproline; partial). F65 carries the post-translational modification Phenylalanine amide. Residues G66–S78 show a composition bias toward basic and acidic residues. A propeptide spanning residues S68 to A79 is cleaved from the precursor. Q80 bears the Pyrrolidone carboxylic acid mark. A Hydroxyproline; partial modification is found at P83. Phenylalanine amide is present on F89. A propeptide spanning residues S92–N128 is cleaved from the precursor. Positions R115–N128 are enriched in basic residues.

This sequence belongs to the NPY family. As to expression, expressed in the brain, terminal ganglion, and midgut of adults: numerous neurosecretory cells and midgut endocrine cells. Expression is dynamic depending on reproductive cycle.

Its subcellular location is the secreted. Has a role in inhibiting host-seeking behavior during a reproductive cycle. This is Head peptide from Aedes aegypti (Yellowfever mosquito).